We begin with the raw amino-acid sequence, 546 residues long: Glutamyl-tRNA(Gln) amidotransferase subunit A, chloroplastic/mitochondrial (546 aa).

Residues 21-52 (KRRRFHSSTPLFLSQPQTLASTDPPSSPPQSQ) are disordered. Residues 27-43 (SSTPLFLSQPQTLASTD) are compositionally biased toward polar residues. Catalysis depends on charge relay system residues lysine 123 and serine 198. The active-site Acyl-ester intermediate is serine 222.

It belongs to the amidase family. GatA subfamily. As to quaternary structure, subunit of the heterotrimeric GatCAB amidotransferase (AdT) complex, composed of A, B and C subunits.

It localises to the mitochondrion. The protein localises to the plastid. The protein resides in the chloroplast stroma. It catalyses the reaction L-glutamyl-tRNA(Gln) + L-glutamine + ATP + H2O = L-glutaminyl-tRNA(Gln) + L-glutamate + ADP + phosphate + H(+). Functionally, allows the formation of correctly charged Gln-tRNA(Gln) through the transamidation of misacylated Glu-tRNA(Gln) in chloroplasts and mitochondria. The reaction takes place in the presence of glutamine and ATP through an activated gamma-phospho-Glu-tRNA(Gln). This is Glutamyl-tRNA(Gln) amidotransferase subunit A, chloroplastic/mitochondrial from Vitis vinifera (Grape).